The primary structure comprises 160 residues: Large ribosomal subunit protein uL18 (160 aa).

It belongs to the universal ribosomal protein uL18 family. Part of the 50S ribosomal subunit. Contacts the 5S and 23S rRNAs.

In terms of biological role, this is one of the proteins that bind and probably mediate the attachment of the 5S RNA into the large ribosomal subunit, where it forms part of the central protuberance. The sequence is that of Large ribosomal subunit protein uL18 from Thermoplasma volcanium (strain ATCC 51530 / DSM 4299 / JCM 9571 / NBRC 15438 / GSS1).